We begin with the raw amino-acid sequence, 289 residues long: LysM and putative peptidoglycan-binding domain-containing protein 4 (289 aa).

Positions 1 to 23 (MRLREGPTHSFQPPSSVHSSLGS) are disordered. At 1 to 208 (MRLREGPTHS…PASGADWGIR (208 aa)) the chain is on the extracellular side. A compositionally biased stretch (polar residues) spans 9–23 (HSFQPPSSVHSSLGS). Asn30 and Asn59 each carry an N-linked (GlcNAc...) asparagine glycan. Positions 71–115 (LERAITEDDNLNKLALQYGCKVSDIKRVNNLITDQDIYALKTIKI) constitute a LysM domain. N-linked (GlcNAc...) asparagine glycosylation is found at Asn134 and Asn178. A helical membrane pass occupies residues 209–229 (WWNAVFIMLLVGIVLPVFYIV). Residues 230–289 (YFKTQGDSEGTFSIEGRTNVSTSLSPHTNTGHSMEQMTQRTSGFSPGLLQDTHKLLNPGG) are Cytoplasmic-facing. Residues 252-272 (SLSPHTNTGHSMEQMTQRTSG) are disordered.

It is found in the membrane. The protein is LysM and putative peptidoglycan-binding domain-containing protein 4 (lysmd4) of Xenopus laevis (African clawed frog).